The chain runs to 317 residues: Acetyl-coenzyme A carboxylase carboxyl transferase subunit alpha (317 aa).

Positions 33–294 (NINKEINCLR…KNRILKDLKE (262 aa)) constitute a CoA carboxyltransferase C-terminal domain.

The protein belongs to the AccA family. As to quaternary structure, acetyl-CoA carboxylase is a heterohexamer composed of biotin carboxyl carrier protein (AccB), biotin carboxylase (AccC) and two subunits each of ACCase subunit alpha (AccA) and ACCase subunit beta (AccD).

Its subcellular location is the cytoplasm. The enzyme catalyses N(6)-carboxybiotinyl-L-lysyl-[protein] + acetyl-CoA = N(6)-biotinyl-L-lysyl-[protein] + malonyl-CoA. It participates in lipid metabolism; malonyl-CoA biosynthesis; malonyl-CoA from acetyl-CoA: step 1/1. Component of the acetyl coenzyme A carboxylase (ACC) complex. First, biotin carboxylase catalyzes the carboxylation of biotin on its carrier protein (BCCP) and then the CO(2) group is transferred by the carboxyltransferase to acetyl-CoA to form malonyl-CoA. In Wigglesworthia glossinidia brevipalpis, this protein is Acetyl-coenzyme A carboxylase carboxyl transferase subunit alpha.